Here is a 375-residue protein sequence, read N- to C-terminus: Ornithine carbamoyltransferase, chloroplastic (375 aa).

Carbamoyl phosphate contacts are provided by residues 123 to 126 (SMRT), Arg174, His201, and Gln204. Residues Asn232, Asp293, Ser297, and Met298 each coordinate L-ornithine. The Proton acceptor role is filled by Cys333. Residues 333–334 (CL) and Arg361 each bind carbamoyl phosphate.

The protein belongs to the aspartate/ornithine carbamoyltransferase superfamily. OTCase family. In terms of assembly, homotrimer.

The protein resides in the plastid. It is found in the chloroplast. The enzyme catalyses carbamoyl phosphate + L-ornithine = L-citrulline + phosphate + H(+). This Pisum sativum (Garden pea) protein is Ornithine carbamoyltransferase, chloroplastic (ARGF).